The sequence spans 45 residues: Parabutoporin (45 aa).

In terms of assembly, monomer and homodimer. In terms of tissue distribution, expressed by the venom gland.

Its subcellular location is the secreted. It localises to the target cell membrane. Functionally, at high concentrations, acts as a pore former in cellular membranes and causes the leakage of the cells. At submicromolar concentrations, degranulates granulocytes and has a weak hemolytic activity against human red blood cells. Also strongly inhibits the production of superoxide anions. Has a strong antibacterial activity against Gram-negative bacteria but is less active against Gram-positive bacteria. Also has antifungal activity. Induces reversible G-protein dependent Ca(2+) release from intracellular stores and increase Ca(2+) influx in HL-60 cells. Induces the activation of the Rac pathway in granulocytes. Synergistically enhances the excitatory effects of short and long chain ion-channel-specific neurotoxins by interaction with the neuronal membranes. The protein is Parabutoporin of Parabuthus schlechteri (Scorpion).